Consider the following 740-residue polypeptide: ATP-dependent RNA helicase DDX1 (740 aa).

Residues 1 to 295 (MAAFSEMGVM…APKALIVEPS (295 aa)) form a necessary for interaction with HNRNPK region. An interaction with dsRNA region spans residues 1–448 (MAAFSEMGVM…DTVHHVVVPV (448 aa)). A necessary for interaction with RELA region spans residues 1 to 525 (MAAFSEMGVM…KIDCDNLEQY (525 aa)). The region spanning 2–428 (AAFSEMGVMP…SEKIMHFPTW (427 aa)) is the Helicase ATP-binding domain. ATP is bound at residue 46 to 53 (AETGSGKT). In terms of domain architecture, B30.2/SPRY spans 70 to 247 (DQQEGKKGKA…LKFNFGEEEF (178 aa)). Residues Lys-239 and Lys-268 each carry the N6-acetyllysine modification. Position 281 is an N6-acetyllysine; alternate (Lys-281). Residue Lys-281 forms a Glycyl lysine isopeptide (Lys-Gly) (interchain with G-Cter in SUMO2); alternate linkage. A DEAD box motif is present at residues 370–373 (DEAD). Position 481 is a phosphoserine (Ser-481). One can recognise a Helicase C-terminal domain in the interval 493–681 (KGEYAVRAIK…QVEPDIKVPV (189 aa)). The segment at 525–740 (YFMQQGGGPD…YLPNQLFRTF (216 aa)) is necessary for interaction with HNRNPK.

The protein belongs to the DEAD box helicase family. DDX1 subfamily. As to quaternary structure, found in a multi-helicase-TICAM1 complex at least composed of DHX36, DDX1, DDX21 and TICAM1; this complex exists in resting cells with or without poly(I:C) RNA ligand stimulation. Interacts with DHX36. Interacts (via B30.2/SPRY domain) with DDX21 (via N-terminus); this interaction serves as bridges to TICAM1. Interacts with FAM98A (via N- and C-terminus). Interacts with PHF5A (via C-terminus). Interacts with MBNL1. Interacts with CSTF2. Interacts with HNRNPK. Interacts with ATM. Interacts with RELA (via C-terminus). Component of the tRNA-splicing ligase complex. Interacts with PQBP1. Interacts with ERCC6. Phosphorylated by ATM kinase; phosphorylation is increased in response to ionizing radiation (IR).

It is found in the nucleus. It localises to the cytoplasm. The protein resides in the cytoplasmic granule. Its subcellular location is the cytosol. The protein localises to the mitochondrion. It carries out the reaction ATP + H2O = ADP + phosphate + H(+). Functionally, acts as an ATP-dependent RNA helicase, able to unwind both RNA-RNA and RNA-DNA duplexes. Possesses 5' single-stranded RNA overhang nuclease activity. Possesses ATPase activity on various RNA, but not DNA polynucleotides. May play a role in RNA clearance at DNA double-strand breaks (DSBs), thereby facilitating the template-guided repair of transcriptionally active regions of the genome. Together with RELA, acts as a coactivator to enhance NF-kappa-B-mediated transcriptional activation. Acts as a positive transcriptional regulator of cyclin CCND2 expression. Binds to the cyclin CCND2 promoter region. Associates with chromatin at the NF-kappa-B promoter region via association with RELA. Binds to poly(A) RNA. May be involved in 3'-end cleavage and polyadenylation of pre-mRNAs. Component of the tRNA-splicing ligase complex required to facilitate the enzymatic turnover of catalytic subunit RTCB: together with archease (ZBTB8OS), acts by facilitating the guanylylation of RTCB, a key intermediate step in tRNA ligation. Component of a multi-helicase-TICAM1 complex that acts as a cytoplasmic sensor of viral double-stranded RNA (dsRNA) and plays a role in the activation of a cascade of antiviral responses including the induction of pro-inflammatory cytokines via the adapter molecule TICAM1. Specifically binds (via helicase ATP-binding domain) on both short and long poly(I:C) dsRNA. This Bos taurus (Bovine) protein is ATP-dependent RNA helicase DDX1 (DDX1).